The primary structure comprises 458 residues: Phosphoglucosamine mutase (458 aa).

Serine 106 serves as the catalytic Phosphoserine intermediate. Positions 106, 247, 249, and 251 each coordinate Mg(2+). A Phosphoserine modification is found at serine 106.

The protein belongs to the phosphohexose mutase family. Mg(2+) is required as a cofactor. In terms of processing, activated by phosphorylation.

The enzyme catalyses alpha-D-glucosamine 1-phosphate = D-glucosamine 6-phosphate. Catalyzes the conversion of glucosamine-6-phosphate to glucosamine-1-phosphate. The chain is Phosphoglucosamine mutase from Chlamydia trachomatis serovar A (strain ATCC VR-571B / DSM 19440 / HAR-13).